The primary structure comprises 74 residues: Homeobox protein H40 (74 aa).

The segment at residues 8 to 67 is a DNA-binding region (homeobox); sequence ARRARTAFTYEQLVALENKFKTTRYLSVCERLNLALSLSLTETQVKIWFQNRRTKWKKQN.

Its subcellular location is the nucleus. The protein is Homeobox protein H40 of Apis mellifera (Honeybee).